The sequence spans 374 residues: MISQINNKGRDNKLEAYDYFLDPSLIASKPCAIRHESRLMIVRNSVLEENCLTNKFTKNLLDEFRKGDLLVVNNTKVMKARLKVQLENRTLVELLVLERSHECVWLCLAKPAKKLKINRKIILKSPYAQDINLMVDGVDEETGGRFIKFPENITDLNSMNDLLNKYGEIPLPPYIKNSEEESFHEKSYQTEYATNPGAVAAPTAGLHLSKSLISNLKKKGVIILPITLHVGYGTFKPIDQEDLSNLKLHKEWVSVNEEVVEEIKRIKKTDRKIIAIGTTSVRALESCYSHEINDYVPIAKYVDLVIKPGYKFKVVDGLLTNFHLPKSSLLLLVSAMIGRERLLDLYKKAIKEKFRFFSYGDAMYISPDSLLEKK.

The protein belongs to the QueA family. As to quaternary structure, monomer.

It localises to the cytoplasm. It catalyses the reaction 7-aminomethyl-7-carbaguanosine(34) in tRNA + S-adenosyl-L-methionine = epoxyqueuosine(34) in tRNA + adenine + L-methionine + 2 H(+). Its pathway is tRNA modification; tRNA-queuosine biosynthesis. In terms of biological role, transfers and isomerizes the ribose moiety from AdoMet to the 7-aminomethyl group of 7-deazaguanine (preQ1-tRNA) to give epoxyqueuosine (oQ-tRNA). The chain is S-adenosylmethionine:tRNA ribosyltransferase-isomerase from Prochlorococcus marinus (strain MIT 9215).